The sequence spans 1056 residues: ISWI chromatin-remodeling complex ATPase CHR11 (1056 aa).

The segment covering 1 to 10 (MARNSNSDEA) has biased composition (low complexity). 2 disordered regions span residues 1–80 (MARN…SKRE) and 133–175 (KSDG…GSGN). 2 stretches are compositionally biased toward acidic residues: residues 11 to 32 (FSSE…EELE) and 60 to 73 (PVED…DEEK). Residues 12–105 (SSEEEEERVK…QEMLESQNAS (94 aa)) adopt a coiled-coil conformation. A compositionally biased stretch (basic residues) spans 141–151 (KKAKGRGRHAS). Acidic residues predominate over residues 155–169 (EEEEDEEYLKEEEDG). Residues 201-366 (IRLYENGING…WALLNFLLPE (166 aa)) form the Helicase ATP-binding domain. 214 to 221 (DEMGLGKT) is an ATP binding site. Residues 317 to 320 (DEAH) carry the DEAH box motif. In terms of domain architecture, Helicase C-terminal spans 494–645 (LLDKLLPKLK…ALVIQQGRLA (152 aa)). Disordered regions lie at residues 738 to 774 (WNDP…PRIP) and 814 to 833 (IDVE…EVEE). Acidic residues predominate over residues 815-833 (DVEEPEEGGDPLTTEEVEE). SANT domains follow at residues 840–892 (EGFS…ERYK) and 941–1002 (QNKG…DTLI). The segment at 1011 to 1056 (EFDERERQARKEKKLAKSATPSKRPLGRQASESPSSTKKRKHLSMR) is disordered. Residues 1047–1056 (TKKRKHLSMR) show a composition bias toward basic residues.

It belongs to the SNF2/RAD54 helicase family. ISWI subfamily. In terms of assembly, interacts with RLT1 and RLT2. Interacts (via C-terminus) with RLT1 (via the DDT domain), RLT2 (via the DDT domain), PTM (via the DDT domain) and DDR4 (via the DDT domain). Binds to FGT1. As to expression, highly expressed in growing tissues such as inflorescence and flower meristems, young leaves and floral organs. Expressed in roots, rosette and cauline leaves, stems, flowers, inflorescences and siliques.

It localises to the nucleus. Possesses intrinsic ATP-dependent nucleosome-remodeling activity. Constitutes the catalytic subunit of several complexes capable of forming ordered nucleosome arrays on chromatin. Involved in the formation of nucleosome distribution patterns. Involved in nuclear proliferation during megagametogenesis and cell expansion in the sporophyte. Required for the maintenance of the plant vegetative phase. In association with RLT1 or RLT2 may prevent the early activation of the vegetative-to-reproductive transition by regulating key genes that contribute to flower timing, such as FT, SEP1, SEP3, AGL8/FUL, SOC1 and FLC. Necessary to acquire heat stress (HS) memory. The chain is ISWI chromatin-remodeling complex ATPase CHR11 from Arabidopsis thaliana (Mouse-ear cress).